We begin with the raw amino-acid sequence, 216 residues long: Protein InaA (216 aa).

It belongs to the protein kinase superfamily. KdkA/RfaP family.

Its function is as follows. May be an environmental sensor responsive to several stimuli, including internal pH, proton motive force, temperature, and possibly other unknown factors. In Escherichia coli (strain K12), this protein is Protein InaA (inaA).